Here is a 77-residue protein sequence, read N- to C-terminus: U8-lycotoxin-Ls1g (77 aa).

Positions 1-20 are cleaved as a signal peptide; it reads MKLIIFTGLVLFAIVSLIEV. A propeptide spanning residues 21-26 is cleaved from the precursor; it reads QADNER.

Belongs to the neurotoxin 19 (CSTX) family. 08 (U8-Lctx) subfamily. Contains 4 disulfide bonds. As to expression, expressed by the venom gland.

The protein localises to the secreted. This is U8-lycotoxin-Ls1g from Lycosa singoriensis (Wolf spider).